A 160-amino-acid chain; its full sequence is UPF0758 protein YfjY (160 aa).

Positions Ala38–Leu160 constitute an MPN domain. Residues His109, His111, and Asp122 each contribute to the Zn(2+) site. Residues His109–Asp122 carry the JAMM motif motif.

This sequence belongs to the UPF0758 family.

This Escherichia coli (strain K12) protein is UPF0758 protein YfjY (yfjY).